We begin with the raw amino-acid sequence, 53 residues long: uncharacterized protein (53 aa).

The protein localises to the mitochondrion matrix. Its subcellular location is the kinetoplast. This is an uncharacterized protein from Trypanosoma brucei brucei.